Here is a 390-residue protein sequence, read N- to C-terminus: Lipid-A-disaccharide synthase (390 aa).

It belongs to the LpxB family.

It catalyses the reaction a lipid X + a UDP-2-N,3-O-bis[(3R)-3-hydroxyacyl]-alpha-D-glucosamine = a lipid A disaccharide + UDP + H(+). The protein operates within bacterial outer membrane biogenesis; LPS lipid A biosynthesis. Functionally, condensation of UDP-2,3-diacylglucosamine and 2,3-diacylglucosamine-1-phosphate to form lipid A disaccharide, a precursor of lipid A, a phosphorylated glycolipid that anchors the lipopolysaccharide to the outer membrane of the cell. The chain is Lipid-A-disaccharide synthase from Haemophilus influenzae (strain 86-028NP).